We begin with the raw amino-acid sequence, 619 residues long: Interferon-activable protein 204 (619 aa).

Residues Met-1 to Glu-88 enclose the Pyrin domain. Residues Leu-24–Leu-35 carry the Nuclear export signal motif. Over residues Arg-86 to Gly-99 the composition is skewed to basic and acidic residues. The tract at residues Arg-86–Val-223 is disordered. Over residues Thr-122–Ala-153 the composition is skewed to low complexity. 3 consecutive repeat copies span residues Ala-134–Gln-140, Ala-141–Gln-147, and Ala-148–Gln-154. The segment at Ala-134–Gln-154 is 3 X 7 AA tandem repeats of A-[GR]-T-S-T-A-Q. A Nuclear localization signal motif is present at residues Thr-150–Lys-157. The segment covering Met-159 to Asp-176 has biased composition (basic and acidic residues). A compositionally biased stretch (low complexity) spans Ser-190–Ala-206. Polar residues predominate over residues Lys-207–Ile-218. HIN-200 domains follow at residues Pro-213–Ser-413 and Asn-417–Ile-615. The segment at Lys-550 to Val-614 is interaction with ID2.

The protein belongs to the HIN-200 family. As to quaternary structure, interacts with UBTF. Interacts with RUNX2. Interacts with ID1, ID2 and ID3. Interacts with STING. Post-translationally, acetylated upon bacterial infection, leading to translocation from nucleus to cytoplasm and subsequent recruitment of STING to activate IFN-beta production. As to expression, present in osteoblasts (at protein level).

It localises to the nucleus. Its subcellular location is the nucleolus. The protein resides in the cytoplasm. In terms of biological role, interferon-stimulated protein that plays a role in several biological processes including cell differentiation, autophagy and innate immunity. Cooperates with CGAS to sense dsDNA and activates the STING-dependent type I IFN pathway. Mechanistically, gets acetylated upon bacterial infection and then translocates from nucleus into cytoplasm to recruit STING for activation of TBK1-dependent IRF3 nuclear translocation and IFN-beta release. Inhibits the transcription of ribosomal RNA. May inhibit DNA binding by UBTF. Inhibits cell growth via p53/TP53 and RB1-dependent and independent pathways. Acts as a coactivator of RUNX2 during osteogenesis. May be involved in macrophage differentiation. Enables skeletal muscle and cardiac myocyte differentiation by sequestring Id proteins in the cytosol and promoting their ubiquitination and subsequent degradation. In Mus musculus (Mouse), this protein is Interferon-activable protein 204 (Ifi204).